Here is a 139-residue protein sequence, read N- to C-terminus: NAD(P) transhydrogenase subunit alpha part 2 (139 aa).

A run of 3 helical transmembrane segments spans residues 49 to 69 (FWWL…VVWS), 78 to 98 (LMGV…IATG), and 107 to 127 (VLGF…FIVT).

As to quaternary structure, complex of an alpha and a beta chain; in Rhodospirillum, the alpha chain seems to be made of two subunits.

Its subcellular location is the cell inner membrane. It carries out the reaction NAD(+) + NADPH + H(+)(in) = NADH + NADP(+) + H(+)(out). In terms of biological role, the transhydrogenation between NADH and NADP is coupled to respiration and ATP hydrolysis and functions as a proton pump across the membrane. The sequence is that of NAD(P) transhydrogenase subunit alpha part 2 (pntAB) from Rhodospirillum rubrum (strain ATCC 11170 / ATH 1.1.1 / DSM 467 / LMG 4362 / NCIMB 8255 / S1).